Here is a 268-residue protein sequence, read N- to C-terminus: Ribosomal RNA small subunit methyltransferase A (268 aa).

Residues Asn18, Leu20, Gly45, Glu66, Asp91, and Asn112 each contribute to the S-adenosyl-L-methionine site.

It belongs to the class I-like SAM-binding methyltransferase superfamily. rRNA adenine N(6)-methyltransferase family. RsmA subfamily.

It is found in the cytoplasm. The catalysed reaction is adenosine(1518)/adenosine(1519) in 16S rRNA + 4 S-adenosyl-L-methionine = N(6)-dimethyladenosine(1518)/N(6)-dimethyladenosine(1519) in 16S rRNA + 4 S-adenosyl-L-homocysteine + 4 H(+). Its function is as follows. Specifically dimethylates two adjacent adenosines (A1518 and A1519) in the loop of a conserved hairpin near the 3'-end of 16S rRNA in the 30S particle. May play a critical role in biogenesis of 30S subunits. In Shewanella baltica (strain OS223), this protein is Ribosomal RNA small subunit methyltransferase A.